Here is a 578-residue protein sequence, read N- to C-terminus: NADPH oxidase 4 (578 aa).

Residues 1-16 (MAVSWRSWLANEGVKH) are Cytoplasmic-facing. Residues 17-37 (LCLFIWLSMNVLLFWKTFLLY) form a helical membrane-spanning segment. The Extracellular portion of the chain corresponds to 38-62 (NQGPEYHYLHQMLGLGLCLSRASAS). A Ferric oxidoreductase domain is found at 58–303 (RASASVLNLN…YCAERLYRYI (246 aa)). A helical membrane pass occupies residues 63-83 (VLNLNCSLILLPMCRTLLAYL). At 84-103 (RGSQKVPSRRTRRLLDKSRT) the chain is on the cytoplasmic side. Residues 104–124 (FHITCGVTICIFSGVHVAAHL) form a helical membrane-spanning segment. At 125–154 (VNALNFSVNYSEDFVELNAARYRDEDPRKL) the chain is on the extracellular side. N-linked (GlcNAc...) asparagine glycosylation occurs at Asn133. The chain crosses the membrane as a helical span at residues 155-175 (LFTTVPGLTGVCMVVVLFLMI). Residues 176–188 (TASTYAIRVSNYD) lie on the Cytoplasmic side of the membrane. Residues 189 to 209 (IFWYTHNLFFVFYMLLTLHVS) traverse the membrane as a helical segment. Residues 210–424 (GGLLKYQTNL…SPFEESLNYE (215 aa)) are Extracellular-facing. The segment at 218–273 (NLDTHPPGCISLNRTSSQNISLPEYFSEHFHEPFPEGFSKPEEFTQNTFVKICMEE) is E-loop; essential for H2O2 generating catalytic activity. A glycan (N-linked (GlcNAc...) asparagine) is linked at Asn230. The interval 248-575 (HEPFPEGFSK…YGTRFEYNKE (328 aa)) is mediates interaction with TLR4. The region spanning 304-419 (RSNKPVTIIS…DGPFGSPFEE (116 aa)) is the FAD-binding FR-type domain. A helical membrane pass occupies residues 425–445 (VSLCVAGGIGVTPFASILNTL). At 446-578 (LDDWKPYKLR…RFEYNKESFS (133 aa)) the chain is on the cytoplasmic side.

As to quaternary structure, interacts with, relocalizes and stabilizes CYBA/p22phox. Interacts with TLR4. Interacts with protein disulfide isomerase. Interacts with PPP1R15A. Interacts with LRRC8A; this interaction prevents the ubiquitin-mediated degradation of LRRC8A. Heme serves as cofactor. In terms of processing, N-glycosylation is required for the function.

It localises to the cytoplasm. The protein resides in the endoplasmic reticulum membrane. The protein localises to the cell membrane. Its subcellular location is the cell junction. It is found in the focal adhesion. It localises to the nucleus. It catalyses the reaction NADPH + 2 O2 = 2 superoxide + NADP(+) + H(+). The catalysed reaction is NADPH + O2 + H(+) = H2O2 + NADP(+). Its activity is regulated as follows. Activated by insulin. Inhibited by diphenylene iodonium. Inhibited by plumbagin. Activated by phorbol 12-myristate 13-acetate (PMA). In terms of biological role, NADPH oxidase that catalyzes predominantly the reduction of oxygen to H2O2. Can also catalyze to a smaller extent, the reduction of oxygen to superoxide. May function as an oxygen sensor regulating the KCNK3/TASK-1 potassium channel and HIF1A activity. May regulate insulin signaling cascade. May play a role in apoptosis, bone resorption and lipolysaccharide-mediated activation of NFKB. May produce superoxide in the nucleus and play a role in regulating gene expression upon cell stimulation. Promotes ferroptosis, reactive oxygen species production and reduced glutathione (GSH) levels by activating NLRP3 inflammasome activation and cytokine release. The protein is NADPH oxidase 4 (NOX4) of Pongo abelii (Sumatran orangutan).